Here is a 508-residue protein sequence, read N- to C-terminus: Acetyl-coenzyme A carboxylase carboxyl transferase subunit beta, chloroplastic (508 aa).

Disordered regions lie at residues 30-51 (PIEN…NIQG) and 173-234 (NSSN…SSTH). Basic and acidic residues predominate over residues 35 to 47 (SESKDPNRNDTDK). The span at 173-219 (NSSNNNSSNENSSNENSSNENSSNENSSNDYISSSISSQSENSSQNE) shows a compositional bias: low complexity. Residues 220–234 (DITTSDQTIPESSTH) show a composition bias toward polar residues. The region spanning 244-508 (LWVQCENCYG…LHTFFPLNQN (265 aa)) is the CoA carboxyltransferase N-terminal domain. Zn(2+) contacts are provided by cysteine 248, cysteine 251, cysteine 267, and cysteine 270. The segment at 248-270 (CENCYGLNYKKFFKSKMHLCEQC) adopts a C4-type zinc-finger fold.

The protein belongs to the AccD/PCCB family. In terms of assembly, acetyl-CoA carboxylase is a heterohexamer composed of biotin carboxyl carrier protein, biotin carboxylase and 2 subunits each of ACCase subunit alpha and ACCase plastid-coded subunit beta (accD). The cofactor is Zn(2+).

It localises to the plastid. It is found in the chloroplast stroma. The catalysed reaction is N(6)-carboxybiotinyl-L-lysyl-[protein] + acetyl-CoA = N(6)-biotinyl-L-lysyl-[protein] + malonyl-CoA. It participates in lipid metabolism; malonyl-CoA biosynthesis; malonyl-CoA from acetyl-CoA: step 1/1. Its function is as follows. Component of the acetyl coenzyme A carboxylase (ACC) complex. Biotin carboxylase (BC) catalyzes the carboxylation of biotin on its carrier protein (BCCP) and then the CO(2) group is transferred by the transcarboxylase to acetyl-CoA to form malonyl-CoA. This is Acetyl-coenzyme A carboxylase carboxyl transferase subunit beta, chloroplastic from Lactuca sativa (Garden lettuce).